A 4318-amino-acid chain; its full sequence is Cytoplasmic dynein 2 heavy chain 1 (4318 aa).

Positions 1–1658 (MPAEDARKEY…IMRMVDAEFQ (1658 aa)) are stem. Residue 147-154 (LKSLVRKQ) participates in ATP binding. 2 coiled-coil regions span residues 1328–1354 (DKAT…QRKW) and 1402–1431 (LRTT…RSIL). AAA stretches follow at residues 1659–1883 (YTYE…VLRG), 1951–2171 (DAIR…RQGD), 2261–2515 (ASDF…WVLG), and 2623–2871 (TFAR…SSSV). Position 1697–1704 (1697–1704 (GPAGTGKT)) interacts with ATP. A coiled-coil region spans residues 1959–1986 (EHNLVVMETQVKKALELYEQLRQRMGVV). Residues 1989 to 1996 (GPSGSGKS), 2301 to 2308 (GPDGCGKG), and 2661 to 2668 (GRSGVGRR) each bind ATP. The segment at 2888–3176 (DVYRRKKQGV…YELEKEQETI (289 aa)) is stalk. Coiled-coil stretches lie at residues 2908-2989 (VAKL…AEIE) and 3423-3480 (QHEK…KTKE). AAA stretches follow at residues 3251–3487 (LSTE…TITQ) and 3699–3914 (MTFF…IIDR).

Belongs to the dynein heavy chain family. As to quaternary structure, the cytoplasmic dynein complex 2 is probably composed by a heavy chain DYH1B homodimer and a number of light intermediate chains.

The protein resides in the cytoplasm. It is found in the cytoskeleton. It localises to the cilium axoneme. Its subcellular location is the cell membrane. In terms of biological role, may function as a motor for intraflagellar retrograde transport. Functions in cilia biogenesis. This chain is Cytoplasmic dynein 2 heavy chain 1 (DYH1B), found in Tripneustes gratilla (Hawaian sea urchin).